Here is a 102-residue protein sequence, read N- to C-terminus: Large ribosomal subunit protein bL21 (102 aa).

This sequence belongs to the bacterial ribosomal protein bL21 family. As to quaternary structure, part of the 50S ribosomal subunit. Contacts protein L20.

This protein binds to 23S rRNA in the presence of protein L20. In Pelobacter propionicus (strain DSM 2379 / NBRC 103807 / OttBd1), this protein is Large ribosomal subunit protein bL21.